A 431-amino-acid chain; its full sequence is Na(+)-translocating NADH-quinone reductase subunit F (431 aa).

The helical transmembrane segment at isoleucine 10–leucine 30 threads the bilayer. The region spanning cysteine 41 to tyrosine 133 is the 2Fe-2S ferredoxin-type domain. The [2Fe-2S] cluster site is built by cysteine 76, cysteine 82, cysteine 85, and cysteine 117. The region spanning alanine 136–lysine 286 is the FAD-binding FR-type domain. Positions asparagine 289–leucine 413 are catalytic.

It belongs to the NqrF family. As to quaternary structure, composed of six subunits; NqrA, NqrB, NqrC, NqrD, NqrE and NqrF. [2Fe-2S] cluster is required as a cofactor. It depends on FAD as a cofactor.

It is found in the cell inner membrane. It catalyses the reaction a ubiquinone + n Na(+)(in) + NADH + H(+) = a ubiquinol + n Na(+)(out) + NAD(+). Functionally, NQR complex catalyzes the reduction of ubiquinone-1 to ubiquinol by two successive reactions, coupled with the transport of Na(+) ions from the cytoplasm to the periplasm. The first step is catalyzed by NqrF, which accepts electrons from NADH and reduces ubiquinone-1 to ubisemiquinone by a one-electron transfer pathway. The sequence is that of Na(+)-translocating NADH-quinone reductase subunit F from Chlamydia muridarum (strain MoPn / Nigg).